The sequence spans 34 residues: Photosystem II reaction center protein Psb30 (34 aa).

A helical transmembrane segment spans residues 6–26; sequence VIAQLVSLGVIVLVGPAVIIL.

Belongs to the Psb30/Ycf12 family. As to quaternary structure, PSII is composed of 1 copy each of membrane proteins PsbA, PsbB, PsbC, PsbD, PsbE, PsbF, PsbH, PsbI, PsbJ, PsbK, PsbL, PsbM, PsbT, PsbX, PsbY, PsbZ, Psb30/Ycf12, peripheral proteins of the oxygen-evolving complex and a large number of cofactors. It forms dimeric complexes.

Its subcellular location is the plastid. It is found in the chloroplast thylakoid membrane. Its function is as follows. A core subunit of photosystem II (PSII), probably helps stabilize the reaction center. This Pyropia yezoensis (Susabi-nori) protein is Photosystem II reaction center protein Psb30.